The chain runs to 278 residues: Large ribosomal subunit protein uL2 (278 aa).

The tract at residues 223–278 (GVAMNPIDHPHGGGEGRTSGGRHPVTPWGFPTKGKKTRSNKRTDTFIVSSRHNRKK) is disordered.

Belongs to the universal ribosomal protein uL2 family. Part of the 50S ribosomal subunit. Forms a bridge to the 30S subunit in the 70S ribosome.

Its function is as follows. One of the primary rRNA binding proteins. Required for association of the 30S and 50S subunits to form the 70S ribosome, for tRNA binding and peptide bond formation. It has been suggested to have peptidyltransferase activity; this is somewhat controversial. Makes several contacts with the 16S rRNA in the 70S ribosome. This Methylobacterium nodulans (strain LMG 21967 / CNCM I-2342 / ORS 2060) protein is Large ribosomal subunit protein uL2.